The primary structure comprises 538 residues: Cytochrome P450 monooxygenase xanG (538 aa).

A helical membrane pass occupies residues 44–64; sequence MILYYLASIPLAIICYLAWYL. N-linked (GlcNAc...) asparagine glycosylation is present at asparagine 378. Cysteine 489 contributes to the heme binding site.

Belongs to the cytochrome P450 family. Heme serves as cofactor.

Its subcellular location is the membrane. The protein operates within secondary metabolite biosynthesis. In terms of biological role, cytochrome P450 monooxygenase; part of the gene cluster that mediates the biosynthesis of the isocyanide xanthocillin and its derivatives. The first step of the pathway consists in the conversion of tyrosine into a vinyl-isonitrile intermediate by the isocyanide synthase xanB. Subsequent oxidative dimerization of this intermediate to form xanthocillin may involve the cytochrome P450 monooxygenase xanG, whose expression is coregulated with that of XanB. Xanthocillin can be further modified by the isonitrile hydratase-like protein xanA which introduces N-formyl groups and the methyltransferase xanE which introduces methyl groups, leading to the production of several derivatives including fumiformamide. Finally, fumiformamide can be subject to both oxidative and reductive cyclization to yield melanocins E and F, respectively. The chain is Cytochrome P450 monooxygenase xanG from Aspergillus fumigatus (strain ATCC MYA-4609 / CBS 101355 / FGSC A1100 / Af293) (Neosartorya fumigata).